The following is a 590-amino-acid chain: Aspartate--tRNA(Asp/Asn) ligase (590 aa).

Glutamate 176 lines the L-aspartate pocket. An aspartate region spans residues 200-203; the sequence is QLFK. L-aspartate is bound by residues arginine 222 and histidine 451. 222-224 contacts ATP; that stretch reads RDE. An ATP-binding site is contributed by glutamate 485. Arginine 492 contacts L-aspartate. 537 to 540 contributes to the ATP binding site; it reads GIDR.

It belongs to the class-II aminoacyl-tRNA synthetase family. Type 1 subfamily. Homodimer.

It is found in the cytoplasm. It carries out the reaction tRNA(Asx) + L-aspartate + ATP = L-aspartyl-tRNA(Asx) + AMP + diphosphate. Functionally, aspartyl-tRNA synthetase with relaxed tRNA specificity since it is able to aspartylate not only its cognate tRNA(Asp) but also tRNA(Asn). Reaction proceeds in two steps: L-aspartate is first activated by ATP to form Asp-AMP and then transferred to the acceptor end of tRNA(Asp/Asn). The protein is Aspartate--tRNA(Asp/Asn) ligase of Ehrlichia ruminantium (strain Gardel).